We begin with the raw amino-acid sequence, 600 residues long: DNA mismatch repair protein MutL (600 aa).

It belongs to the DNA mismatch repair MutL/HexB family.

In terms of biological role, this protein is involved in the repair of mismatches in DNA. It is required for dam-dependent methyl-directed DNA mismatch repair. May act as a 'molecular matchmaker', a protein that promotes the formation of a stable complex between two or more DNA-binding proteins in an ATP-dependent manner without itself being part of a final effector complex. In Sinorhizobium fredii (strain NBRC 101917 / NGR234), this protein is DNA mismatch repair protein MutL.